The following is a 363-amino-acid chain: Protein-glutamate methylesterase/protein-glutamine glutaminase 2 (363 aa).

A Response regulatory domain is found at 7–124; that stretch reads RVLVVDDSAL…SLTLENVADE (118 aa). Asp-58 carries the 4-aspartylphosphate modification. One can recognise a CheB-type methylesterase domain in the interval 160-357; that stretch reads PVASRTTPSK…NLLMVQSAAQ (198 aa). Active-site residues include Ser-176, His-203, and Asp-299.

It belongs to the CheB family. In terms of processing, phosphorylated by CheA. Phosphorylation of the N-terminal regulatory domain activates the methylesterase activity.

It localises to the cytoplasm. The enzyme catalyses [protein]-L-glutamate 5-O-methyl ester + H2O = L-glutamyl-[protein] + methanol + H(+). It carries out the reaction L-glutaminyl-[protein] + H2O = L-glutamyl-[protein] + NH4(+). Its function is as follows. Involved in chemotaxis. Part of a chemotaxis signal transduction system that modulates chemotaxis in response to various stimuli. Catalyzes the demethylation of specific methylglutamate residues introduced into the chemoreceptors (methyl-accepting chemotaxis proteins or MCP) by CheR. Also mediates the irreversible deamidation of specific glutamine residues to glutamic acid. The polypeptide is Protein-glutamate methylesterase/protein-glutamine glutaminase 2 (Koribacter versatilis (strain Ellin345)).